A 740-amino-acid chain; its full sequence is Probable RNA-dependent RNA polymerase 1 (740 aa).

The protein belongs to the RdRP family.

It catalyses the reaction RNA(n) + a ribonucleoside 5'-triphosphate = RNA(n+1) + diphosphate. Probably involved in the RNA silencing pathway and required for the generation of small interfering RNAs (siRNAs). The polypeptide is Probable RNA-dependent RNA polymerase 1 (RDR1) (Oryza sativa subsp. japonica (Rice)).